Reading from the N-terminus, the 221-residue chain is Protein Thf1 (221 aa).

Residues 174 to 213 are a coiled coil; sequence TKERVEKDVNLYKSSLDKIEKALELIEMNIKDEKRRNKER.

The protein belongs to the THF1 family.

May be involved in photosynthetic membrane biogenesis. The sequence is that of Protein Thf1 from Prochlorococcus marinus (strain MIT 9211).